Reading from the N-terminus, the 447-residue chain is Glucose-6-phosphate isomerase (447 aa).

The Proton donor role is filled by glutamate 287. Catalysis depends on residues histidine 308 and lysine 422.

Belongs to the GPI family.

It localises to the cytoplasm. The catalysed reaction is alpha-D-glucose 6-phosphate = beta-D-fructose 6-phosphate. It functions in the pathway carbohydrate biosynthesis; gluconeogenesis. The protein operates within carbohydrate degradation; glycolysis; D-glyceraldehyde 3-phosphate and glycerone phosphate from D-glucose: step 2/4. Catalyzes the reversible isomerization of glucose-6-phosphate to fructose-6-phosphate. This chain is Glucose-6-phosphate isomerase, found in Heliobacterium modesticaldum (strain ATCC 51547 / Ice1).